The primary structure comprises 149 residues: SsrA-binding protein (149 aa).

It belongs to the SmpB family.

It localises to the cytoplasm. Functionally, required for rescue of stalled ribosomes mediated by trans-translation. Binds to transfer-messenger RNA (tmRNA), required for stable association of tmRNA with ribosomes. tmRNA and SmpB together mimic tRNA shape, replacing the anticodon stem-loop with SmpB. tmRNA is encoded by the ssrA gene; the 2 termini fold to resemble tRNA(Ala) and it encodes a 'tag peptide', a short internal open reading frame. During trans-translation Ala-aminoacylated tmRNA acts like a tRNA, entering the A-site of stalled ribosomes, displacing the stalled mRNA. The ribosome then switches to translate the ORF on the tmRNA; the nascent peptide is terminated with the 'tag peptide' encoded by the tmRNA and targeted for degradation. The ribosome is freed to recommence translation, which seems to be the essential function of trans-translation. The polypeptide is SsrA-binding protein (Wolbachia sp. subsp. Brugia malayi (strain TRS)).